A 155-amino-acid polypeptide reads, in one-letter code: RNA pyrophosphohydrolase (155 aa).

Positions Lys5–Ala147 constitute a Nudix hydrolase domain. Positions Gly42 to Gly63 match the Nudix box motif.

This sequence belongs to the Nudix hydrolase family. RppH subfamily. A divalent metal cation is required as a cofactor.

Its function is as follows. Accelerates the degradation of transcripts by removing pyrophosphate from the 5'-end of triphosphorylated RNA, leading to a more labile monophosphorylated state that can stimulate subsequent ribonuclease cleavage. The protein is RNA pyrophosphohydrolase of Helicobacter pylori (strain ATCC 700392 / 26695) (Campylobacter pylori).